We begin with the raw amino-acid sequence, 968 residues long: Alanine--tRNA ligase, cytoplasmic (968 aa).

ATP-binding positions include R77, H95, W176, and 214-216; that span reads IWN. Residues N216 and D239 each contribute to the L-alanine site. G243 provides a ligand contact to ATP. Zn(2+)-binding residues include H606, H610, C724, and H728.

Belongs to the class-II aminoacyl-tRNA synthetase family. In terms of assembly, monomer. The cofactor is Zn(2+).

It localises to the cytoplasm. The catalysed reaction is tRNA(Ala) + L-alanine + ATP = L-alanyl-tRNA(Ala) + AMP + diphosphate. Its function is as follows. Catalyzes the attachment of alanine to tRNA(Ala) in a two-step reaction: alanine is first activated by ATP to form Ala-AMP and then transferred to the acceptor end of tRNA(Ala). Also edits incorrectly charged tRNA(Ala) via its editing domain. This Caenorhabditis elegans protein is Alanine--tRNA ligase, cytoplasmic.